The chain runs to 233 residues: Mediator of RNA polymerase II transcription subunit 7 (233 aa).

A Glycyl lysine isopeptide (Lys-Gly) (interchain with G-Cter in SUMO1); alternate cross-link involves residue Lys185. Lys185 participates in a covalent cross-link: Glycyl lysine isopeptide (Lys-Gly) (interchain with G-Cter in SUMO2); alternate. A disordered region spans residues 188–213 (PMDADDSNNCTGQSDQQRENSGHRRD). Phosphoserine is present on Ser194. Basic and acidic residues predominate over residues 203 to 213 (QQRENSGHRRD).

This sequence belongs to the Mediator complex subunit 7 family. In terms of assembly, component of the Mediator complex, which is composed of MED1, MED4, MED6, MED7, MED8, MED9, MED10, MED11, MED12, MED13, MED13L, MED14, MED15, MED16, MED17, MED18, MED19, MED20, MED21, MED22, MED23, MED24, MED25, MED26, MED27, MED29, MED30, MED31, CCNC, CDK8 and CDC2L6/CDK11. The MED12, MED13, CCNC and CDK8 subunits form a distinct module termed the CDK8 module. Mediator containing the CDK8 module is less active than Mediator lacking this module in supporting transcriptional activation. Individual preparations of the Mediator complex lacking one or more distinct subunits have been variously termed ARC, CRSP, DRIP, PC2, SMCC and TRAP.

The protein resides in the nucleus. Its function is as follows. Component of the Mediator complex, a coactivator involved in the regulated transcription of nearly all RNA polymerase II-dependent genes. Mediator functions as a bridge to convey information from gene-specific regulatory proteins to the basal RNA polymerase II transcription machinery. Mediator is recruited to promoters by direct interactions with regulatory proteins and serves as a scaffold for the assembly of a functional preinitiation complex with RNA polymerase II and the general transcription factors. This is Mediator of RNA polymerase II transcription subunit 7 (MED7) from Sus scrofa (Pig).